The sequence spans 129 residues: Glycine cleavage system H protein (129 aa).

The region spanning 24–106 (EAVVGITEHA…YGAGWLFRIK (83 aa)) is the Lipoyl-binding domain. K65 carries the N6-lipoyllysine modification.

This sequence belongs to the GcvH family. The glycine cleavage system is composed of four proteins: P, T, L and H. Requires (R)-lipoate as cofactor.

Its function is as follows. The glycine cleavage system catalyzes the degradation of glycine. The H protein shuttles the methylamine group of glycine from the P protein to the T protein. In Aeromonas salmonicida (strain A449), this protein is Glycine cleavage system H protein.